The primary structure comprises 173 residues: NADH-ubiquinone oxidoreductase chain 6 (173 aa).

Transmembrane regions (helical) follow at residues 1–21, 27–47, 48–68, 87–107, and 139–159; these read MTYFVVFLGLCFVLGGLAVAS, YGVVGLVLASVVGCGWLLSLG, VSFVSLVLFMVYLGGMLVVFV, VVGYGASFVVVLMVGGVIGGF, and CGVGMFLVAGWGLVLTLFVVL.

It belongs to the complex I subunit 6 family.

It is found in the mitochondrion membrane. The enzyme catalyses a ubiquinone + NADH + 5 H(+)(in) = a ubiquinol + NAD(+) + 4 H(+)(out). Its function is as follows. Core subunit of the mitochondrial membrane respiratory chain NADH dehydrogenase (Complex I) that is believed to belong to the minimal assembly required for catalysis. Complex I functions in the transfer of electrons from NADH to the respiratory chain. The immediate electron acceptor for the enzyme is believed to be ubiquinone. This is NADH-ubiquinone oxidoreductase chain 6 (MT-ND6) from Cepphus columba (Pigeon guillemot).